Consider the following 424-residue polypeptide: Protein CLP1 homolog 5 (424 aa).

ATP is bound by residues E16, T56, and 124 to 129 (DSGKST).

It belongs to the Clp1 family. Clp1 subfamily. In terms of assembly, forms a complex with cleavage and polyadenylation specificity factor (CPSF) subunits PCFS1, FIPS3 and CPSF30.

It is found in the nucleus. Its function is as follows. Required for endonucleolytic cleavage during polyadenylation-dependent pre-mRNA 3'-end formation. The protein is Protein CLP1 homolog 5 of Arabidopsis thaliana (Mouse-ear cress).